Consider the following 484-residue polypeptide: DNA-binding protein (484 aa).

Residues 1–69 form a disordered region; it reads MASNQHSQRE…ESAEEEEAEP (69 aa). Positions 51-60 are enriched in low complexity; sequence SMAAIPLSPE. Tyr-150 is subject to Phosphotyrosine; by host. Zn(2+)-binding residues include Cys-239 and His-241. The tract at residues 252-286 is flexible loop; the sequence is VEMDVTSESGQRALKENPSKAKVAQNRWGRNVVQI. Positions 294, 310, 351, 353, 405, and 421 each coordinate Zn(2+). The segment at 468–484 is C-terminal arm, DBP binding; that stretch reads ISLPTNHGDCREEPFDF.

It belongs to the adenoviridae E2A DNA-binding protein family. As to quaternary structure, homomultimerizes on viral ssDNA bound to pTP. Forms a initiation complex with viral polymerase, pTP and hosts NFIA and POU2F1/OCT1. Interacts with host SRCAP.

The protein localises to the host nucleus. Functionally, plays a role in the elongation phase of viral strand displacement replication by unwinding the template in an ATP-independent fashion, employing its capacity to form multimers. Also enhances the rate of initiation. Released from template upon second strand synthesis. Assembles in complex with viral pTP, viral pol, host NFIA and host POU2F1/OCT1 on viral origin of replication. Covers the whole ssDNA genome during synthesis. The complementary strand synthesis induces its relese from DNA template. May inhibit cellular transcription mediated by the interaction between host SRCAP and CBP. This chain is DNA-binding protein, found in Human adenovirus A serotype 12 (HAdV-12).